Here is a 293-residue protein sequence, read N- to C-terminus: LysM and putative peptidoglycan-binding domain-containing protein 4 (293 aa).

Residues 1–214 lie on the Extracellular side of the membrane; that stretch reads MRQKEVLAKS…VADGADCGIQ (214 aa). A disordered region spans residues 28 to 65; the sequence is FNNGSGDSGDSSEEESHQVVLRPRGKEHQKNSSQRPGA. N-linked (GlcNAc...) asparagine glycosylation is present at N30. Residues 71–115 form the LysM domain; it reads LQRELAQEDSLNKLALQYGCKVADIKKANNFIREQDLYALKSIKI. A helical membrane pass occupies residues 215–235; sequence WWNAVFLMLLIGIVLPVFYLV. The Cytoplasmic portion of the chain corresponds to 236–293; that stretch reads YFKIQATGEPSNGLNATVVPNGSMTLSPVPGQAPRLAIPVPTLPASDSQVSPTTQAGA.

The protein localises to the membrane. In Mus musculus (Mouse), this protein is LysM and putative peptidoglycan-binding domain-containing protein 4 (Lysmd4).